Here is a 503-residue protein sequence, read N- to C-terminus: Maturase K (503 aa).

The protein belongs to the intron maturase 2 family. MatK subfamily.

It is found in the plastid. The protein resides in the chloroplast. In terms of biological role, usually encoded in the trnK tRNA gene intron. Probably assists in splicing its own and other chloroplast group II introns. This chain is Maturase K, found in Vicia faba (Broad bean).